A 454-amino-acid chain; its full sequence is Bifunctional protein GlmU (454 aa).

Residues 1-227 form a pyrophosphorylase region; that stretch reads MTQLSVVILA…FMEVEGANNR (227 aa). UDP-N-acetyl-alpha-D-glucosamine contacts are provided by residues 9-12, Lys-23, Gln-74, 79-80, 101-103, Gly-138, Glu-152, Asn-167, and Asn-225; these read LAAG, GT, and YGD. Asp-103 serves as a coordination point for Mg(2+). Asn-225 is a Mg(2+) binding site. The segment at 228–248 is linker; that stretch reads LQLAALERFYQKTQAEKLLLA. An N-acetyltransferase region spans residues 249–454; the sequence is GVRLIDPARF…QGWQRPTKKK (206 aa). UDP-N-acetyl-alpha-D-glucosamine-binding residues include Arg-331 and Lys-349. Residue His-361 is the Proton acceptor of the active site. UDP-N-acetyl-alpha-D-glucosamine is bound by residues Tyr-364 and Asn-375. Acetyl-CoA-binding positions include Ala-378, 384 to 385, Ser-403, Ala-421, and Arg-438; that span reads NY.

It in the N-terminal section; belongs to the N-acetylglucosamine-1-phosphate uridyltransferase family. In the C-terminal section; belongs to the transferase hexapeptide repeat family. Homotrimer. Mg(2+) serves as cofactor.

It is found in the cytoplasm. The catalysed reaction is alpha-D-glucosamine 1-phosphate + acetyl-CoA = N-acetyl-alpha-D-glucosamine 1-phosphate + CoA + H(+). It catalyses the reaction N-acetyl-alpha-D-glucosamine 1-phosphate + UTP + H(+) = UDP-N-acetyl-alpha-D-glucosamine + diphosphate. Its pathway is nucleotide-sugar biosynthesis; UDP-N-acetyl-alpha-D-glucosamine biosynthesis; N-acetyl-alpha-D-glucosamine 1-phosphate from alpha-D-glucosamine 6-phosphate (route II): step 2/2. It functions in the pathway nucleotide-sugar biosynthesis; UDP-N-acetyl-alpha-D-glucosamine biosynthesis; UDP-N-acetyl-alpha-D-glucosamine from N-acetyl-alpha-D-glucosamine 1-phosphate: step 1/1. It participates in bacterial outer membrane biogenesis; LPS lipid A biosynthesis. Its function is as follows. Catalyzes the last two sequential reactions in the de novo biosynthetic pathway for UDP-N-acetylglucosamine (UDP-GlcNAc). The C-terminal domain catalyzes the transfer of acetyl group from acetyl coenzyme A to glucosamine-1-phosphate (GlcN-1-P) to produce N-acetylglucosamine-1-phosphate (GlcNAc-1-P), which is converted into UDP-GlcNAc by the transfer of uridine 5-monophosphate (from uridine 5-triphosphate), a reaction catalyzed by the N-terminal domain. The sequence is that of Bifunctional protein GlmU from Actinobacillus pleuropneumoniae serotype 3 (strain JL03).